Reading from the N-terminus, the 192-residue chain is MNTIWIAVGALTFLGLVFGAILGYASRRFAVEDDPVVEKIDAILPQSQCGQCGYPGCRPYAEAVGLQGEKINRCAPGGEAVMLKIADLLNVEPQPCDAEEQQAAPVRMLAVIDENHCIGCTKCIQACPVDAIVGATRAMHTVMSDLCTGCNLCVDPCPTHCIELRPVNETPDSWKWDLNTIPVRIIPVEQHA.

The tract at residues 1 to 26 (MNTIWIAVGALTFLGLVFGAILGYAS) is hydrophobic. The 60-residue stretch at 32–91 (EDDPVVEKIDAILPQSQCGQCGYPGCRPYAEAVGLQGEKINRCAPGGEAVMLKIADLLNV) folds into the 4Fe-4S domain. [4Fe-4S] cluster contacts are provided by Cys-49, Cys-52, Cys-57, Cys-74, Cys-117, Cys-120, Cys-123, Cys-127, Cys-147, Cys-150, Cys-153, and Cys-157. 2 consecutive 4Fe-4S ferredoxin-type domains span residues 108–137 (MLAV…GATR) and 138–167 (AMHT…LRPV).

Belongs to the 4Fe4S bacterial-type ferredoxin family. RnfB subfamily. The complex is composed of six subunits: RsxA, RsxB, RsxC, RsxD, RsxE and RsxG. The cofactor is [4Fe-4S] cluster.

It localises to the cell inner membrane. Part of a membrane-bound complex that couples electron transfer with translocation of ions across the membrane. Required to maintain the reduced state of SoxR. This Salmonella arizonae (strain ATCC BAA-731 / CDC346-86 / RSK2980) protein is Ion-translocating oxidoreductase complex subunit B.